The chain runs to 219 residues: uncharacterized protein (219 aa).

Residues 30–107 (FRLFVGNLGN…RPVKLSRATS (78 aa)) form the RRM domain. Residues 140–149 (KKIKNKHGKN) show a composition bias toward basic residues. The tract at residues 140-219 (KKIKNKHGKN…YSRASSFRRV (80 aa)) is disordered. The segment covering 150–169 (SSKSSRAAQSAAAELISSSS) has biased composition (low complexity). The segment covering 176 to 186 (ANSTSVPNAVN) has biased composition (polar residues).

This is an uncharacterized protein from Schizosaccharomyces pombe (strain 972 / ATCC 24843) (Fission yeast).